A 230-amino-acid chain; its full sequence is Large ribosomal subunit protein uL1 (230 aa).

This sequence belongs to the universal ribosomal protein uL1 family. In terms of assembly, part of the 50S ribosomal subunit.

In terms of biological role, binds directly to 23S rRNA. The L1 stalk is quite mobile in the ribosome, and is involved in E site tRNA release. Functionally, protein L1 is also a translational repressor protein, it controls the translation of the L11 operon by binding to its mRNA. This Leptospira biflexa serovar Patoc (strain Patoc 1 / Ames) protein is Large ribosomal subunit protein uL1.